Reading from the N-terminus, the 112-residue chain is Putative pterin-4-alpha-carbinolamine dehydratase (112 aa).

The protein belongs to the pterin-4-alpha-carbinolamine dehydratase family.

The enzyme catalyses (4aS,6R)-4a-hydroxy-L-erythro-5,6,7,8-tetrahydrobiopterin = (6R)-L-erythro-6,7-dihydrobiopterin + H2O. This Shewanella baltica (strain OS223) protein is Putative pterin-4-alpha-carbinolamine dehydratase.